A 118-amino-acid polypeptide reads, in one-letter code: Small ribosomal subunit protein eS10 (118 aa).

Positions 91 to 118 (RLKNAPAERPRPSRGGPRRGGYRGRARD) are disordered. Residues 106 to 118 (GPRRGGYRGRARD) show a composition bias toward basic residues.

The protein belongs to the eukaryotic ribosomal protein eS10 family. As to quaternary structure, component of the small ribosomal subunit. Mature ribosomes consist of a small (40S) and a large (60S) subunit. The 40S subunit contains about 32 different proteins and 1 molecule of RNA (18S). The 60S subunit contains 45 different proteins and 3 molecules of RNA (25S, 5.8S and 5S).

The protein resides in the cytoplasm. In terms of biological role, component of the ribosome, a large ribonucleoprotein complex responsible for the synthesis of proteins in the cell. The small ribosomal subunit (SSU) binds messenger RNAs (mRNAs) and translates the encoded message by selecting cognate aminoacyl-transfer RNA (tRNA) molecules. The large subunit (LSU) contains the ribosomal catalytic site termed the peptidyl transferase center (PTC), which catalyzes the formation of peptide bonds, thereby polymerizing the amino acids delivered by tRNAs into a polypeptide chain. The nascent polypeptides leave the ribosome through a tunnel in the LSU and interact with protein factors that function in enzymatic processing, targeting, and the membrane insertion of nascent chains at the exit of the ribosomal tunnel. This chain is Small ribosomal subunit protein eS10 (RPS10), found in Candida albicans (strain SC5314 / ATCC MYA-2876) (Yeast).